A 382-amino-acid polypeptide reads, in one-letter code: Serine/threonine-protein kinase (382 aa).

Positions 1–10 (MENKQCDHLT) are enriched in basic and acidic residues. The tract at residues 1–75 (MENKQCDHLT…ASESDEDDDD (75 aa)) is disordered. Residues 12–24 (WFSTTSDASESMD) are compositionally biased toward polar residues. The segment covering 45-75 (ADEDLYSDISEGDLEYSDCDSASESDEDDDD) has biased composition (acidic residues). Residues 93 to 379 (YTVIKTLTPG…AEELLSYPMF (287 aa)) form the Protein kinase domain. ATP-binding positions include 99–107 (LTPGSEGRV) and Lys-122. Catalysis depends on Asp-207, which acts as the Proton acceptor.

This sequence belongs to the protein kinase superfamily. Ser/Thr protein kinase family.

The catalysed reaction is L-seryl-[protein] + ATP = O-phospho-L-seryl-[protein] + ADP + H(+). It carries out the reaction L-threonyl-[protein] + ATP = O-phospho-L-threonyl-[protein] + ADP + H(+). The polypeptide is Serine/threonine-protein kinase (US2) (Equus caballus (Horse)).